The primary structure comprises 88 residues: Large ribosomal subunit protein bL27 (88 aa).

Positions 1 to 21 (MAHKKGASSSRNGRDSAAQRL) are disordered.

Belongs to the bacterial ribosomal protein bL27 family.

This chain is Large ribosomal subunit protein bL27, found in Mycobacterium avium (strain 104).